An 83-amino-acid chain; its full sequence is Small ribosomal subunit protein bS20 (83 aa).

The protein belongs to the bacterial ribosomal protein bS20 family.

Its function is as follows. Binds directly to 16S ribosomal RNA. This Staphylococcus aureus (strain JH1) protein is Small ribosomal subunit protein bS20.